The chain runs to 50 residues: MARYRCCRSRSRSRCYRRRRRCRTRRRRCCRRRRARRCCRRRYKLRCRRY.

This sequence belongs to the protamine P1 family. As to quaternary structure, cross-linked by interchain disulfide bonds around the DNA-helix. In terms of tissue distribution, testis.

It localises to the nucleus. It is found in the chromosome. Its function is as follows. Protamines substitute for histones in the chromatin of sperm during the haploid phase of spermatogenesis. They compact sperm DNA into a highly condensed, stable and inactive complex. This chain is Sperm protamine P1 (PRM1), found in Saimiri sciureus (Common squirrel monkey).